Consider the following 87-residue polypeptide: Small ribosomal subunit protein uS17 (87 aa).

The protein belongs to the universal ribosomal protein uS17 family. As to quaternary structure, part of the 30S ribosomal subunit.

One of the primary rRNA binding proteins, it binds specifically to the 5'-end of 16S ribosomal RNA. This is Small ribosomal subunit protein uS17 from Bacillus mycoides (strain KBAB4) (Bacillus weihenstephanensis).